A 302-amino-acid polypeptide reads, in one-letter code: Aliphatic sulfonates import ATP-binding protein SsuB (302 aa).

The span at 30-57 shows a compositional bias: low complexity; sequence PATADAQHTADAQHTADAQHTADAQHTA. Positions 30–65 are disordered; the sequence is PATADAQHTADAQHTADAQHTADAQHTAETAETRGA. Residues 70 to 284 form the ABC transporter domain; that stretch reads IRIRGLRRTF…RRTDPAFDRL (215 aa). Residue 102–109 coordinates ATP; it reads GRSGSGKS.

It belongs to the ABC transporter superfamily. Aliphatic sulfonates importer (TC 3.A.1.17.2) family. In terms of assembly, the complex is composed of two ATP-binding proteins (SsuB), two transmembrane proteins (SsuC) and a solute-binding protein (SsuA).

Its subcellular location is the cell membrane. It carries out the reaction ATP + H2O + aliphatic sulfonate-[sulfonate-binding protein]Side 1 = ADP + phosphate + aliphatic sulfonateSide 2 + [sulfonate-binding protein]Side 1.. Its function is as follows. Part of the ABC transporter complex SsuABC involved in aliphatic sulfonates import. Responsible for energy coupling to the transport system. This Frankia casuarinae (strain DSM 45818 / CECT 9043 / HFP020203 / CcI3) protein is Aliphatic sulfonates import ATP-binding protein SsuB.